Consider the following 188-residue polypeptide: dCTP deaminase (188 aa).

Residues 111–116 (KSTYAR), 135–137 (TLE), glutamine 156, tyrosine 170, lysine 179, and glutamine 180 each bind dCTP. Glutamate 137 functions as the Proton donor/acceptor in the catalytic mechanism.

The protein belongs to the dCTP deaminase family. Homotrimer.

It catalyses the reaction dCTP + H2O + H(+) = dUTP + NH4(+). Its pathway is pyrimidine metabolism; dUMP biosynthesis; dUMP from dCTP (dUTP route): step 1/2. Catalyzes the deamination of dCTP to dUTP. The polypeptide is dCTP deaminase (Rickettsia africae (strain ESF-5)).